We begin with the raw amino-acid sequence, 455 residues long: Probable glycine dehydrogenase (decarboxylating) subunit 1 (455 aa).

Belongs to the GcvP family. N-terminal subunit subfamily. In terms of assembly, the glycine cleavage system is composed of four proteins: P, T, L and H. In this organism, the P 'protein' is a heterodimer of two subunits.

The catalysed reaction is N(6)-[(R)-lipoyl]-L-lysyl-[glycine-cleavage complex H protein] + glycine + H(+) = N(6)-[(R)-S(8)-aminomethyldihydrolipoyl]-L-lysyl-[glycine-cleavage complex H protein] + CO2. Functionally, the glycine cleavage system catalyzes the degradation of glycine. The P protein binds the alpha-amino group of glycine through its pyridoxal phosphate cofactor; CO(2) is released and the remaining methylamine moiety is then transferred to the lipoamide cofactor of the H protein. The chain is Probable glycine dehydrogenase (decarboxylating) subunit 1 from Saccharolobus solfataricus (strain ATCC 35092 / DSM 1617 / JCM 11322 / P2) (Sulfolobus solfataricus).